We begin with the raw amino-acid sequence, 746 residues long: Polyribonucleotide nucleotidyltransferase (746 aa).

Mg(2+)-binding residues include aspartate 519 and aspartate 525. Residues 585–644 (PRVIAVKIPVDKIGEVIGPKGKMINQIQEDTGADISIEDDGTVYIGATNGPSADAARSAI) form the KH domain. The 73-residue stretch at 656-728 (GERYLGTVVK…DRGKLSLSPV (73 aa)) folds into the S1 motif domain.

The protein belongs to the polyribonucleotide nucleotidyltransferase family. The cofactor is Mg(2+).

The protein localises to the cytoplasm. It catalyses the reaction RNA(n+1) + phosphate = RNA(n) + a ribonucleoside 5'-diphosphate. Its function is as follows. Involved in mRNA degradation. Catalyzes the phosphorolysis of single-stranded polyribonucleotides processively in the 3'- to 5'-direction. The sequence is that of Polyribonucleotide nucleotidyltransferase from Arthrobacter sp. (strain FB24).